Here is a 70-residue protein sequence, read N- to C-terminus: Large ribosomal subunit protein uL29 (70 aa).

Belongs to the universal ribosomal protein uL29 family.

This Thermosynechococcus vestitus (strain NIES-2133 / IAM M-273 / BP-1) protein is Large ribosomal subunit protein uL29.